Here is a 526-residue protein sequence, read N- to C-terminus: Fatty-acid amide hydrolase 2-B (526 aa).

A helical transmembrane segment spans residues cysteine 12 to threonine 32. Active-site charge relay system residues include lysine 128 and serine 203. Catalysis depends on serine 227, which acts as the Acyl-ester intermediate.

It belongs to the amidase family.

Its subcellular location is the membrane. The catalysed reaction is N-(5Z,8Z,11Z,14Z-eicosatetraenoyl)-ethanolamine + H2O = ethanolamine + (5Z,8Z,11Z,14Z)-eicosatetraenoate. It carries out the reaction (9Z)-octadecenamide + H2O = (9Z)-octadecenoate + NH4(+). In Danio rerio (Zebrafish), this protein is Fatty-acid amide hydrolase 2-B (faah2b).